A 251-amino-acid chain; its full sequence is 3-isopropylmalate dehydratase small subunit 1 (251 aa).

The transit peptide at 1 to 59 (MAASLQSANPTLSRTLASPNKPSSFATFRSPFLRFNSTSVASNFKPLVSREASSSFVTR) directs the protein to the chloroplast.

Belongs to the LeuD family. As to quaternary structure, heterodimer of the large LEUC/IIL1 subunit and the small LEUD (SSU1, SSU2 or SSU3) subunits. Expressed at low levels in roots, root tips, at the basis of the hypocotyls, and in emerging leaves. In young seedlings, expressed in cotyledon epidermal cells. In hypocotyls, expressed in peripheral cells. In seedling roots, expressed in the epidermis, including root hairs, and throughout the cortex. In rosette leaves, expressed in the upper and lower epidermis. In roots of adult plants, expressed in the root tips and cortex of the mature root enclosing the stele. In flowering stalks, expressed in the epidermis. Expressed in the carpel epidermis.

Its subcellular location is the plastid. It is found in the chloroplast stroma. The enzyme catalyses (2R,3S)-3-isopropylmalate = (2S)-2-isopropylmalate. It participates in amino-acid biosynthesis; L-leucine biosynthesis; L-leucine from 3-methyl-2-oxobutanoate: step 2/4. In terms of biological role, catalyzes the isomerization between 2-isopropylmalate and 3-isopropylmalate, via the formation of 2-isopropylmaleate. Plays an essential role in leucine biosynthesis. Functions in both the biosynthesis of leucine, and in the methionine chain elongation pathway of aliphatic glucosinolate formation. Plays an essential role in female gametophyte development. This Arabidopsis thaliana (Mouse-ear cress) protein is 3-isopropylmalate dehydratase small subunit 1.